The following is a 306-amino-acid chain: Protein YIPF1 (306 aa).

At Met1–Asp119 the chain is on the cytoplasmic side. Residues Pro33–Asn59 are disordered. The span at Glu50–Asn59 shows a compositional bias: acidic residues. Residues Leu120–Leu140 traverse the membrane as a helical segment. Over Ser141–Ser162 the chain is Lumenal. The helical transmembrane segment at Ile163 to Leu183 threads the bilayer. Topologically, residues Leu184–Glu200 are cytoplasmic. A helical membrane pass occupies residues Ile201–Ile221. The Lumenal segment spans residues Pro222 to Arg227. A helical membrane pass occupies residues Trp228 to Pro248. Residues Ala249 to Arg256 are Cytoplasmic-facing. A helical membrane pass occupies residues Val257 to Leu277. The Lumenal segment spans residues Ala278–Ser306. N-linked (GlcNAc...) asparagine glycosylation is present at Asn297.

This sequence belongs to the YIP1 family. Interacts with YIPF6; this interaction may stabilize YIPF1. May also form a ternary complex with YIPF2 and YIPF6.

It localises to the golgi apparatus. The protein resides in the cis-Golgi network membrane. The protein localises to the trans-Golgi network membrane. Its subcellular location is the late endosome membrane. This chain is Protein YIPF1 (Yipf1), found in Rattus norvegicus (Rat).